Reading from the N-terminus, the 57-residue chain is Conotoxin reg3.17 (57 aa).

Residues 1–16 (TICLLLFPLTVVPLDG) form the signal peptide. A propeptide spanning residues 17-44 (DQPAHQPAVRKHNIKSAVQLRQWDEEQQ) is cleaved from the precursor. 3 cysteine pairs are disulfide-bonded: C45–C57, C46–C53, and C50–C56.

The protein belongs to the conotoxin M superfamily. In terms of tissue distribution, expressed by the venom duct.

Its subcellular location is the secreted. The polypeptide is Conotoxin reg3.17 (Conus regius (Crown cone)).